A 252-amino-acid chain; its full sequence is DNA-(apurinic or apyrimidinic site) lyase Nei2 (252 aa).

Residue proline 2 is the Schiff-base intermediate with DNA of the active site. Residue glutamate 3 is the Proton donor of the active site. Lysine 51 functions as the Proton donor (in beta-elimination) in the catalytic mechanism. An FPG-type zinc finger spans residues 216-250 (WVYGRAGEPCRRCGTLIQTDRGGERVTYWCPVCQT). 4 residues coordinate Zn(2+): cysteine 225, cysteine 228, cysteine 245, and cysteine 248.

It belongs to the FPG family. In terms of assembly, monomer. The cofactor is Zn(2+).

It catalyses the reaction 2'-deoxyribonucleotide-(2'-deoxyribose 5'-phosphate)-2'-deoxyribonucleotide-DNA = a 3'-end 2'-deoxyribonucleotide-(2,3-dehydro-2,3-deoxyribose 5'-phosphate)-DNA + a 5'-end 5'-phospho-2'-deoxyribonucleoside-DNA + H(+). Functionally, involved in base excision repair of DNA damaged by oxidation or by mutagenic agents. Acts as DNA glycosylase that recognizes and removes damaged bases. In terms of biological role, involved in the repair of psoralen-UVA DNA cross-links. A lyase that cleaves single-stranded (ss)DNA but not double-stranded (ds)DNA with an abasic site. Has 5-hydroxyuracil (5-OH-U) glycosylase activity on ssDNA with 5-OH-U, with 10-fold less activity on dsDNA, but weak to no uracil glycosylase activity. Has weak glycosylase activity on thymine glycol and dihydrothymine residues in ssDNA. Cleaves the DNA backbone by beta-delta elimination to generate a single-strand break at the site of the removed base with both 3'- and 5'-phosphates. The sequence is that of DNA-(apurinic or apyrimidinic site) lyase Nei2 from Mycolicibacterium smegmatis (strain ATCC 700084 / mc(2)155) (Mycobacterium smegmatis).